Reading from the N-terminus, the 102-residue chain is Aspartyl/glutamyl-tRNA(Asn/Gln) amidotransferase subunit C (102 aa).

It belongs to the GatC family. Heterotrimer of A, B and C subunits.

The catalysed reaction is L-glutamyl-tRNA(Gln) + L-glutamine + ATP + H2O = L-glutaminyl-tRNA(Gln) + L-glutamate + ADP + phosphate + H(+). It carries out the reaction L-aspartyl-tRNA(Asn) + L-glutamine + ATP + H2O = L-asparaginyl-tRNA(Asn) + L-glutamate + ADP + phosphate + 2 H(+). In terms of biological role, allows the formation of correctly charged Asn-tRNA(Asn) or Gln-tRNA(Gln) through the transamidation of misacylated Asp-tRNA(Asn) or Glu-tRNA(Gln) in organisms which lack either or both of asparaginyl-tRNA or glutaminyl-tRNA synthetases. The reaction takes place in the presence of glutamine and ATP through an activated phospho-Asp-tRNA(Asn) or phospho-Glu-tRNA(Gln). This is Aspartyl/glutamyl-tRNA(Asn/Gln) amidotransferase subunit C from Leuconostoc citreum (strain KM20).